Consider the following 325-residue polypeptide: Methionyl-tRNA formyltransferase (325 aa).

Ser-113–Pro-116 is a (6S)-5,6,7,8-tetrahydrofolate binding site.

The protein belongs to the Fmt family.

It catalyses the reaction L-methionyl-tRNA(fMet) + (6R)-10-formyltetrahydrofolate = N-formyl-L-methionyl-tRNA(fMet) + (6S)-5,6,7,8-tetrahydrofolate + H(+). In terms of biological role, attaches a formyl group to the free amino group of methionyl-tRNA(fMet). The formyl group appears to play a dual role in the initiator identity of N-formylmethionyl-tRNA by promoting its recognition by IF2 and preventing the misappropriation of this tRNA by the elongation apparatus. In Chromohalobacter salexigens (strain ATCC BAA-138 / DSM 3043 / CIP 106854 / NCIMB 13768 / 1H11), this protein is Methionyl-tRNA formyltransferase.